Consider the following 218-residue polypeptide: Ribose-5-phosphate isomerase A (218 aa).

Residues 28–31, 81–84, and 94–97 each bind substrate; these read TGST, DGAD, and KGGG. Catalysis depends on E103, which acts as the Proton acceptor. Substrate is bound at residue K121.

It belongs to the ribose 5-phosphate isomerase family. In terms of assembly, homodimer.

The catalysed reaction is aldehydo-D-ribose 5-phosphate = D-ribulose 5-phosphate. It functions in the pathway carbohydrate degradation; pentose phosphate pathway; D-ribose 5-phosphate from D-ribulose 5-phosphate (non-oxidative stage): step 1/1. Catalyzes the reversible conversion of ribose-5-phosphate to ribulose 5-phosphate. The protein is Ribose-5-phosphate isomerase A of Sodalis glossinidius (strain morsitans).